The primary structure comprises 215 residues: Cytochrome b6 (215 aa).

The chain crosses the membrane as a helical span at residues 32–52 (IFYCLGGITLTCFLIQFATGF). Residue C35 coordinates heme c. Positions 86 and 100 each coordinate heme b. Helical transmembrane passes span 90 to 110 (ASMM…TGGF), 116 to 136 (LTWV…VTGY), and 186 to 206 (AHTF…FLMI). Heme b contacts are provided by H187 and H202.

Belongs to the cytochrome b family. PetB subfamily. The 4 large subunits of the cytochrome b6-f complex are cytochrome b6, subunit IV (17 kDa polypeptide, PetD), cytochrome f and the Rieske protein, while the 4 small subunits are PetG, PetL, PetM and PetN. The complex functions as a dimer. The cofactor is heme b. Heme c serves as cofactor.

It localises to the cellular thylakoid membrane. Functionally, component of the cytochrome b6-f complex, which mediates electron transfer between photosystem II (PSII) and photosystem I (PSI), cyclic electron flow around PSI, and state transitions. This is Cytochrome b6 from Desmonostoc sp. (strain PCC 7906) (Nostoc sp. (strain PCC 7906)).